Here is an 875-residue protein sequence, read N- to C-terminus: MLSNTLRSNFLKFYTNRNHTPVASSPVFPYNDPSILFTNAGMNQFKNIFLGKEQTSYTRATTSQKCIRAGGKHNDLENVGHTSRHLTFFEMLGNFSFGDYFKQDAISFAWEVSLSVFNFDPDFIYATVHEKDDEAFALWEKYLPTNRIFRLTDKDNFWSMADTGPCGFCSELLFDRGEKFGKATSPLEDADGERFLEYWNLVFMEFNRTSDGTLLALQKKCVDTGAGLERLVSLLSETDTVFEADVLRHLIAKVENLSEITYSPTESKGSAFRVIADHVRSLSFAITDGLLPGNTERGYVLRKILRRAVNYGKRLGFHRPFLAEIVPSLIETMGEAYPELQAAETQIQEVLTTEEEHFFKTLQRGGNLLHQVLKSSASLSKISGEDAFKLKDTYGLPIDEIALLAKDHNYTVDMDTFRKLEMEAKERSRKNTVKNKNDSDSIFQDVDPTNTSEFVGYDMLSCDTFIEGIVKYNEIASTLEEGEEGAIILRTTPFYAEKGGQVGDSGEIFCESGTFLVSHTTTPKAGLIAHHGKLSQGSLQTTMAVTAQVNQNLRKKIANNHTGCHLLHKALEVSLGEHIRQAGSYVDSQKIRLDFSHNKALSPEELLTIETLVNEKIRENVPVTIREALYSDVMNSSEIKQFFGDKYGDIVRVVSAGFSHELCGGTHARATGDIGYFRITKEHAVSTGIRRIEATTGEDAENIARGQDTDLNEIATIIQSPKDQLLVKLRNVMEEKKDLAKQLANLENQLVQQQVKSLLTSCDKVNETSYLVYHLTEEEGQRIQHYANTLHKEVPAKFISLWVTEKNDRYIVLVRVSDDLVKQGIDAQALLEELLAPYGGRCGGKAVSAQGSSKELPQIEVLNTILRQWISTRLA.

Positions 426–445 (ERSRKNTVKNKNDSDSIFQD) are disordered. The Zn(2+) site is built by H561, H565, C663, and H667.

It belongs to the class-II aminoacyl-tRNA synthetase family. The cofactor is Zn(2+).

It is found in the cytoplasm. The catalysed reaction is tRNA(Ala) + L-alanine + ATP = L-alanyl-tRNA(Ala) + AMP + diphosphate. Catalyzes the attachment of alanine to tRNA(Ala) in a two-step reaction: alanine is first activated by ATP to form Ala-AMP and then transferred to the acceptor end of tRNA(Ala). Also edits incorrectly charged Ser-tRNA(Ala) and Gly-tRNA(Ala) via its editing domain. This chain is Alanine--tRNA ligase, found in Chlamydia muridarum (strain MoPn / Nigg).